A 548-amino-acid polypeptide reads, in one-letter code: Chaperonin GroEL 3 (548 aa).

ATP contacts are provided by residues 30–33, K51, 87–91, G415, and D496; these read TLGP and DGTTT.

This sequence belongs to the chaperonin (HSP60) family. As to quaternary structure, forms a cylinder of 14 subunits composed of two heptameric rings stacked back-to-back. Interacts with the co-chaperonin GroES.

Its subcellular location is the cytoplasm. The catalysed reaction is ATP + H2O + a folded polypeptide = ADP + phosphate + an unfolded polypeptide.. Its function is as follows. Together with its co-chaperonin GroES, plays an essential role in assisting protein folding. The GroEL-GroES system forms a nano-cage that allows encapsulation of the non-native substrate proteins and provides a physical environment optimized to promote and accelerate protein folding. This Nitrobacter winogradskyi (strain ATCC 25391 / DSM 10237 / CIP 104748 / NCIMB 11846 / Nb-255) protein is Chaperonin GroEL 3.